Consider the following 975-residue polypeptide: Synaptopodin 2-like protein (975 aa).

One can recognise a PDZ domain in the interval 6-85 (EVQVTLAGGA…QLVLTVRRVT (80 aa)). 3 disordered regions span residues 18-41 (GFRL…QAGR), 86-214 (DEGS…PAEA), and 314-349 (AGTG…QSDW). Phosphoserine occurs at positions 105 and 108. Position 138 is a phosphothreonine (Thr-138). Phosphoserine occurs at positions 140, 163, 175, and 177. The segment covering 187–200 (GSPSQGDSRVSSPS) has biased composition (polar residues). A compositionally biased stretch (low complexity) spans 202–214 (EEGAALQPPPAEA). Positions 339–349 (DARSLTNQSDW) are enriched in polar residues. 5 positions are modified to phosphoserine: Ser-342, Ser-347, Ser-371, Ser-378, and Ser-381. Residues Arg-383, Arg-463, Arg-466, and Arg-476 each carry the omega-N-methylarginine modification. Residues 491-649 (KVNEGLGSTS…ETKNSPNPEL (159 aa)) are disordered. Residues 502–516 (APSPFAAPPQGPTPL) show a composition bias toward pro residues. Over residues 519–528 (FTTVVPSHTP) the composition is skewed to polar residues. Composition is skewed to low complexity over residues 530-540 (SGASSSTQRSS) and 571-580 (SAAAMTSTAS). Residues Ser-667 and Ser-675 each carry the phosphoserine modification. The interval 687–731 (LGGRSYKTLPQVSPKTPPPMAPKTPPPTTPKTPPPVAPKPGSRGL) is disordered. Residues 701 to 724 (KTPPPMAPKTPPPTTPKTPPPVAP) show a composition bias toward pro residues. Residues Thr-702 and Thr-710 each carry the phosphothreonine modification. At Arg-754 the chain carries Omega-N-methylarginine. The tract at residues 772-797 (EATSGSSLNPGLRPRSPSPTPSLPPS) is disordered. Residues Ser-787 and Ser-789 each carry the phosphoserine modification. Thr-791 carries the phosphothreonine modification. Omega-N-methylarginine is present on residues Arg-805, Arg-825, and Arg-888. Ser-890 is modified (phosphoserine). Phosphothreonine is present on residues Thr-891 and Thr-897. An Omega-N-methylarginine modification is found at Arg-909. Asymmetric dimethylarginine; alternate is present on Arg-920. The residue at position 920 (Arg-920) is an Omega-N-methylarginine; alternate. An omega-N-methylarginine mark is found at Arg-953 and Arg-955.

The protein belongs to the synaptopodin family.

Its subcellular location is the cytoplasm. The protein localises to the cytoskeleton. Its function is as follows. Actin-associated protein that may play a role in modulating actin-based shape. The polypeptide is Synaptopodin 2-like protein (Synpo2l) (Mus musculus (Mouse)).